A 428-amino-acid chain; its full sequence is 3-phosphoshikimate 1-carboxyvinyltransferase (428 aa).

3 residues coordinate 3-phosphoshikimate: K23, S24, and R28. K23 is a phosphoenolpyruvate binding site. Phosphoenolpyruvate contacts are provided by G97 and R125. Residues S170, S171, Q172, S198, D314, N337, and K341 each contribute to the 3-phosphoshikimate site. Residue Q172 participates in phosphoenolpyruvate binding. The active-site Proton acceptor is D314. Positions 345, 387, and 412 each coordinate phosphoenolpyruvate.

Belongs to the EPSP synthase family. Monomer.

It is found in the cytoplasm. It carries out the reaction 3-phosphoshikimate + phosphoenolpyruvate = 5-O-(1-carboxyvinyl)-3-phosphoshikimate + phosphate. The protein operates within metabolic intermediate biosynthesis; chorismate biosynthesis; chorismate from D-erythrose 4-phosphate and phosphoenolpyruvate: step 6/7. Functionally, catalyzes the transfer of the enolpyruvyl moiety of phosphoenolpyruvate (PEP) to the 5-hydroxyl of shikimate-3-phosphate (S3P) to produce enolpyruvyl shikimate-3-phosphate and inorganic phosphate. This Edwardsiella ictaluri (strain 93-146) protein is 3-phosphoshikimate 1-carboxyvinyltransferase.